Reading from the N-terminus, the 284-residue chain is Tropomyosin (284 aa).

A coiled-coil region spans residues 1-284; sequence MDAIKKKMQA…DQTFQELFGY (284 aa). Residues 113 to 142 show a composition bias toward basic and acidic residues; that stretch reads LEKATHTADESDRVRKVMENRSFQDEERAN. Residues 113–143 are disordered; the sequence is LEKATHTADESDRVRKVMENRSFQDEERANT.

The protein belongs to the tropomyosin family.

Its function is as follows. Tropomyosin, in association with the troponin complex, plays a central role in the calcium dependent regulation of muscle contraction. This is Tropomyosin from Acanthocheilonema viteae (Filarial nematode worm).